Consider the following 229-residue polypeptide: Urease accessory protein UreF (229 aa).

The protein belongs to the UreF family. UreD, UreF and UreG form a complex that acts as a GTP-hydrolysis-dependent molecular chaperone, activating the urease apoprotein by helping to assemble the nickel containing metallocenter of UreC. The UreE protein probably delivers the nickel.

Its subcellular location is the cytoplasm. Required for maturation of urease via the functional incorporation of the urease nickel metallocenter. The protein is Urease accessory protein UreF of Ralstonia pickettii (strain 12J).